The sequence spans 77 residues: Translation initiation factor IF-1, chloroplastic (77 aa).

Positions 1–71 (MKEQKWIHEG…TRGRIIYRLR (71 aa)) constitute an S1-like domain.

The protein belongs to the IF-1 family. As to quaternary structure, component of the 30S ribosomal translation pre-initiation complex which assembles on the 30S ribosome in the order IF-2 and IF-3, IF-1 and N-formylmethionyl-tRNA(fMet); mRNA recruitment can occur at any time during PIC assembly.

It is found in the plastid. It localises to the chloroplast. Its function is as follows. One of the essential components for the initiation of protein synthesis. Stabilizes the binding of IF-2 and IF-3 on the 30S subunit to which N-formylmethionyl-tRNA(fMet) subsequently binds. Helps modulate mRNA selection, yielding the 30S pre-initiation complex (PIC). Upon addition of the 50S ribosomal subunit IF-1, IF-2 and IF-3 are released leaving the mature 70S translation initiation complex. This chain is Translation initiation factor IF-1, chloroplastic, found in Lactuca sativa (Garden lettuce).